The chain runs to 57 residues: Large ribosomal subunit protein bL32c (57 aa).

It belongs to the bacterial ribosomal protein bL32 family.

The protein localises to the plastid. Its subcellular location is the chloroplast. This is Large ribosomal subunit protein bL32c from Vitis vinifera (Grape).